A 203-amino-acid chain; its full sequence is Mitotic spindle checkpoint component mad2 (203 aa).

Residues 13 to 197 form the HORMA domain; that stretch reads KGSSKLVSEF…TSMHKIDCQV (185 aa).

The protein belongs to the MAD2 family. In terms of assembly, interacts with mad3 and slp1.

The protein localises to the nucleus. In terms of biological role, feedback control that prevents cells with incompletely assembled spindles from leaving mitosis. It interacts with the anaphase promoting complex/cyclosome (APC/C) thereby inhibiting APC/C-dependent proteolysis, a step required for exit from mitosis. This is Mitotic spindle checkpoint component mad2 from Schizosaccharomyces pombe (strain 972 / ATCC 24843) (Fission yeast).